A 257-amino-acid polypeptide reads, in one-letter code: Phosphate import ATP-binding protein PstB (257 aa).

Residues 11 to 252 (FNISRLYLYI…PKNELTEKYV (242 aa)) enclose the ABC transporter domain. Residue 43-50 (GPSGSGKS) coordinates ATP.

Belongs to the ABC transporter superfamily. Phosphate importer (TC 3.A.1.7) family. In terms of assembly, the complex is composed of two ATP-binding proteins (PstB), two transmembrane proteins (PstC and PstA) and a solute-binding protein (PstS).

The protein localises to the cell membrane. It carries out the reaction phosphate(out) + ATP + H2O = ADP + 2 phosphate(in) + H(+). Part of the ABC transporter complex PstSACB involved in phosphate import. Responsible for energy coupling to the transport system. The sequence is that of Phosphate import ATP-binding protein PstB from Saccharolobus solfataricus (strain ATCC 35092 / DSM 1617 / JCM 11322 / P2) (Sulfolobus solfataricus).